The chain runs to 251 residues: Elongation factor Ts (251 aa).

Positions 82–85 (TDFV) are involved in Mg(2+) ion dislocation from EF-Tu. Residues 215 to 251 (QMGQKAPEPVAAAPQVEEKAPEPAAKDNPPAKGKKKK) form a disordered region. Residues 219-229 (KAPEPVAAAPQ) are compositionally biased toward low complexity. Basic and acidic residues predominate over residues 230–239 (VEEKAPEPAA).

The protein belongs to the EF-Ts family.

Its subcellular location is the cytoplasm. Functionally, associates with the EF-Tu.GDP complex and induces the exchange of GDP to GTP. It remains bound to the aminoacyl-tRNA.EF-Tu.GTP complex up to the GTP hydrolysis stage on the ribosome. The polypeptide is Elongation factor Ts (Microcystis aeruginosa (strain NIES-843 / IAM M-2473)).